The primary structure comprises 319 residues: Fructokinase (319 aa).

It belongs to the carbohydrate kinase PfkB family. As to expression, expressed in swelling stolons and, at higher levels, in developing tubers. Low levels found in leaves and stems from tuberizing plants.

It catalyses the reaction D-fructose + ATP = D-fructose 6-phosphate + ADP + H(+). Its pathway is glycan biosynthesis; starch biosynthesis. Functionally, may play an important role in maintaining the flux of carbon towards starch formation. The sequence is that of Fructokinase from Solanum tuberosum (Potato).